A 172-amino-acid chain; its full sequence is Small ribosomal subunit protein uS5 (172 aa).

Residues L15–I78 enclose the S5 DRBM domain.

Belongs to the universal ribosomal protein uS5 family. In terms of assembly, part of the 30S ribosomal subunit. Contacts proteins S4 and S8.

Its function is as follows. With S4 and S12 plays an important role in translational accuracy. Located at the back of the 30S subunit body where it stabilizes the conformation of the head with respect to the body. This is Small ribosomal subunit protein uS5 from Dehalococcoides mccartyi (strain ATCC BAA-2266 / KCTC 15142 / 195) (Dehalococcoides ethenogenes (strain 195)).